A 108-amino-acid polypeptide reads, in one-letter code: MVSVKGQLHIDLLGASFSIQADEDSSYLRVLYEHYKMVVLQVEKTSGVRDPLKVAVIAGVLLADELHKEKRRRLVQSEEDLLEIGESTERMLESISKVVDEGFVCGRD.

This is an uncharacterized protein from Treponema pallidum (strain Nichols).